A 289-amino-acid polypeptide reads, in one-letter code: Rhodopsin (289 aa).

At 1–7 the chain is on the extracellular side; it reads YLVNPAA. A helical membrane pass occupies residues 8 to 32; sequence YAAPGAYMFLLILVGFPVNFLTLYV. At 33-44 the chain is on the cytoplasmic side; that stretch reads TLEHKKLRTPLN. The helical transmembrane segment at 45 to 67 threads the bilayer; it reads YILLNLAVADLFMVLGGFTTTMY. At 68–81 the chain is on the extracellular side; sequence TSMHGYFVLGRLGC. A disulfide bridge links cysteine 81 with cysteine 158. A helical membrane pass occupies residues 82–104; the sequence is NLEGFFATLGGEIALWSLVVLAI. Residues 105–107 carry the 'Ionic lock' involved in activated form stabilization motif; the sequence is ERW. At 105–123 the chain is on the cytoplasmic side; sequence ERWIVVCKPISNFRFTEDH. Residues 124-144 form a helical membrane-spanning segment; the sequence is AIMGLAFSWVMALTCAVPPLV. The Extracellular segment spans residues 145–173; the sequence is GWSRYIPEGMQCSCGVDYYTRAEGFNNES. N-linked (GlcNAc...) asparagine glycosylation occurs at asparagine 171. A helical membrane pass occupies residues 174–195; sequence FVIYMFIVHFLIPLSNNFFCYG. The Cytoplasmic portion of the chain corresponds to 196–223; it reads RLLCAVKEAAAAQQESETTQRAEREVSR. Residues 224–245 traverse the membrane as a helical segment; that stretch reads MVVMMVVSFLMCWLPYASVAWY. Residues 246–257 lie on the Extracellular side of the membrane; that stretch reads IFCNQGSEFGPI. The helical transmembrane segment at 258 to 279 threads the bilayer; that stretch reads FMTLPAFFAKSSAIYNPLIYIC. N6-(retinylidene)lysine is present on lysine 267. The Cytoplasmic portion of the chain corresponds to 280–289; the sequence is MNKHVRHCMI.

It belongs to the G-protein coupled receptor 1 family. Opsin subfamily. Phosphorylated on some or all of the serine and threonine residues present in the C-terminal region. In terms of processing, contains one covalently linked retinal chromophore.

It is found in the membrane. Its subcellular location is the cell projection. The protein localises to the cilium. It localises to the photoreceptor outer segment. Its function is as follows. Photoreceptor required for image-forming vision at low light intensity. While most salt water fish species use retinal as chromophore, most freshwater fish use 3-dehydroretinal, or a mixture of retinal and 3-dehydroretinal. Light-induced isomerization of 11-cis to all-trans retinal triggers a conformational change that activates signaling via G-proteins. Subsequent receptor phosphorylation mediates displacement of the bound G-protein alpha subunit by arrestin and terminates signaling. This is Rhodopsin (rho) from Cottocomephorus grewingkii (Baikal yellowfin).